The primary structure comprises 230 residues: Ribose-5-phosphate isomerase A (230 aa).

Substrate-binding positions include Thr31 to Thr34, Asp87 to Asp90, and Lys100 to Gly103. The active-site Proton acceptor is Glu109. Residue Lys127 coordinates substrate.

The protein belongs to the ribose 5-phosphate isomerase family. As to quaternary structure, homodimer.

The enzyme catalyses aldehydo-D-ribose 5-phosphate = D-ribulose 5-phosphate. It participates in carbohydrate degradation; pentose phosphate pathway; D-ribose 5-phosphate from D-ribulose 5-phosphate (non-oxidative stage): step 1/1. In terms of biological role, catalyzes the reversible conversion of ribose-5-phosphate to ribulose 5-phosphate. This chain is Ribose-5-phosphate isomerase A, found in Lactobacillus delbrueckii subsp. bulgaricus (strain ATCC 11842 / DSM 20081 / BCRC 10696 / JCM 1002 / NBRC 13953 / NCIMB 11778 / NCTC 12712 / WDCM 00102 / Lb 14).